The chain runs to 527 residues: Peptide chain release factor 3 (527 aa).

Positions 9–277 (AKRRTFAIIS…AVVNWAPKPL (269 aa)) constitute a tr-type G domain. Residues 18–25 (SHPDAGKT), 86–90 (DTPGH), and 140–143 (NKLD) each bind GTP.

Belongs to the TRAFAC class translation factor GTPase superfamily. Classic translation factor GTPase family. PrfC subfamily.

Its subcellular location is the cytoplasm. Functionally, increases the formation of ribosomal termination complexes and stimulates activities of RF-1 and RF-2. It binds guanine nucleotides and has strong preference for UGA stop codons. It may interact directly with the ribosome. The stimulation of RF-1 and RF-2 is significantly reduced by GTP and GDP, but not by GMP. This Pseudomonas savastanoi pv. phaseolicola (strain 1448A / Race 6) (Pseudomonas syringae pv. phaseolicola (strain 1448A / Race 6)) protein is Peptide chain release factor 3.